Reading from the N-terminus, the 326-residue chain is ELAV-like protein 1 (326 aa).

At Ser-2 the chain carries N-acetylserine. A Phosphoserine modification is found at Ser-2. An RRM 1 domain is found at 20–98; sequence TNLIVNYLPQ…KTIKVSYARP (79 aa). Residues Ser-100 and Ser-158 each carry the phosphoserine modification. The 81-residue stretch at 106 to 186 folds into the RRM 2 domain; the sequence is ANLYISGLPR…EPITVKFAAN (81 aa). A Glycyl lysine isopeptide (Lys-Gly) (interchain with G-Cter in SUMO2) cross-link involves residue Lys-191. Phosphoserine is present on residues Ser-197 and Ser-202. Arg-206 carries the omega-N-methylarginine modification. Arg-217 bears the Asymmetric dimethylarginine; by CARM1; alternate mark. The residue at position 217 (Arg-217) is an Omega-N-methylarginine; alternate. Phosphoserine occurs at positions 221 and 318. Residues 244-322 enclose the RRM 3 domain; the sequence is WCIFIYNLGQ…KILQVSFKTN (79 aa).

It belongs to the RRM elav family. In terms of assembly, monomer and homodimer (in vitro). Interacts with ANP32A. Interacts with ZNF385A; the interaction is indirect and mRNA-dependent and may regulate p53/TP53 expression. Identified in a mRNP complex, at least composed of DHX9, DDX3X, ELAVL1, HNRNPU, IGF2BP1, ILF3, PABPC1, PCBP2, PTBP2, STAU1, STAU2, SYNCRIP and YBX1. Interacts with AGO1 and AGO2. Interacts with IGF2BP1. Interacts with IGF2BP2 and IGF2BP3. Interacts with HNRNPL. Interacts with DHX36; this interaction occurs in a RNA-dependent manner. Interacts with ILF3; this interaction occurs in a RNA-dependent manner. Interacts with PLEKHN1. Interacts with SHFL; the interaction increases in presence of RNA. Interacts with YBX1; interaction recruits ELAVL1 on C5-methylcytosine (m5C)-containing mRNAs, thereby promoting mRNA stability. Interacts with FXR1. Post-translationally, phosphorylated by MAPKAPK2. Phosphorylated by PRKCD. Methylated at Arg-217 by CARM1 in T-cells in response to LPS challenge.

The protein resides in the cytoplasm. The protein localises to the nucleus. It is found in the stress granule. Its subcellular location is the P-body. Functionally, RNA-binding protein that binds to the 3'-UTR region of mRNAs and increases their stability. Involved in embryonic stem cell (ESC) differentiation: preferentially binds mRNAs that are not methylated by N6-methyladenosine (m6A), stabilizing them, promoting ESC differentiation. Has also been shown to be capable of binding to m6A-containing mRNAs and contributes to MYC stability by binding to m6A-containing MYC mRNAs. Binds to poly-U elements and AU-rich elements (AREs) in the 3'-UTR of target mRNAs. Binds avidly to the AU-rich element in FOS and IL3/interleukin-3 mRNAs. In the case of the FOS AU-rich element, binds to a core element of 27 nucleotides that contain AUUUA, AUUUUA, and AUUUUUA motifs. Binds preferentially to the 5'-UUUU[AG]UUU-3' motif in vitro. With ZNF385A, binds the 3'-UTR of p53/TP53 mRNA to control their nuclear export induced by CDKN2A. Hence, may regulate p53/TP53 expression and mediate in part the CDKN2A anti-proliferative activity. May also bind with ZNF385A the CCNB1 mRNA. Increases the stability of the leptin mRNA harboring an AU-rich element (ARE) in its 3' UTR. In Mus musculus (Mouse), this protein is ELAV-like protein 1 (Elavl1).